The chain runs to 807 residues: Spondin-1 (807 aa).

The signal sequence occupies residues 1–28; the sequence is MRLSPAPLRLSRGPALLALALPLAAALA. In terms of domain architecture, Reelin spans 29 to 194; that stretch reads FSDETLDKVA…DPTLDGVTDR (166 aa). 17 cysteine pairs are disulfide-bonded: cysteine 44/cysteine 128, cysteine 156/cysteine 182, cysteine 199/cysteine 336, cysteine 200/cysteine 340, cysteine 202/cysteine 415, cysteine 443/cysteine 480, cysteine 454/cysteine 489, cysteine 459/cysteine 494, cysteine 502/cysteine 538, cysteine 513/cysteine 517, cysteine 548/cysteine 554, cysteine 559/cysteine 595, cysteine 570/cysteine 574, cysteine 605/cysteine 610, cysteine 615/cysteine 650, cysteine 626/cysteine 630, and cysteine 660/cysteine 665. One can recognise a Spondin domain in the interval 195–388; that stretch reads PILDCCACGT…LTSLDHPQSP (194 aa). Asparagine 214 is a glycosylation site (N-linked (GlcNAc...) asparagine). Residues aspartate 325, aspartate 354, and aspartate 358 each contribute to the Ca(2+) site. TSP type-1 domains are found at residues 442–495, 501–555, 558–611, 614–666, and 668–721; these read TCIY…PGCS, TCTM…EECS, SCLV…PECH, PCLL…PECP, and DCEL…RKCL. N-linked (GlcNAc...) asparagine glycosylation occurs at asparagine 681. The segment covering 732–746 has biased composition (basic and acidic residues); sequence REARESRRSEQLREE. The disordered stretch occupies residues 732–752; the sequence is REARESRRSEQLREESDGEQF. The region spanning 754–806 is the TSP type-1 6 domain; it reads GCRMRPWTAWSECTKLCGGGIQERYMTVKKRFKSSQFTSCKDKKEIRACNVHP.

In terms of assembly, binds to the central extracellular domain of APP and inhibits beta-secretase cleavage of APP. Expressed at high levels in the floor plate.

It is found in the secreted. It localises to the extracellular space. Its subcellular location is the extracellular matrix. In terms of biological role, cell adhesion protein that promotes the attachment of spinal cord and sensory neuron cells and the outgrowth of neurites in vitro. May contribute to the growth and guidance of axons in both the spinal cord and the PNS. The polypeptide is Spondin-1 (Spon1) (Rattus norvegicus (Rat)).